A 329-amino-acid polypeptide reads, in one-letter code: Acetoacetyl CoA synthase NphT7 (329 aa).

Residues C115, H256, and N286 contribute to the active site.

The protein belongs to the thiolase-like superfamily. FabH family. In terms of assembly, homodimer.

Its subcellular location is the cytoplasm. It carries out the reaction malonyl-CoA + acetyl-CoA + H(+) = acetoacetyl-CoA + CO2 + CoA. Its pathway is metabolic intermediate biosynthesis; (R)-mevalonate biosynthesis. In terms of biological role, catalyzes the condensation of acetyl-CoA and malonyl-CoA to form acetoacetyl-CoA and CoA. Does not accept malonyl-[acyl-carrier-protein] as a substrate. Can also convert malonyl-CoA into acetyl-CoA via decarboxylation of malonyl-CoA. This is Acetoacetyl CoA synthase NphT7 (nphT7) from Streptomyces sp. (strain CL190).